The chain runs to 74 residues: Putative membrane protein insertion efficiency factor (74 aa).

The protein belongs to the UPF0161 family.

The protein localises to the cell inner membrane. Its function is as follows. Could be involved in insertion of integral membrane proteins into the membrane. The sequence is that of Putative membrane protein insertion efficiency factor from Anaeromyxobacter sp. (strain Fw109-5).